The following is a 540-amino-acid chain: Collagen alpha-1(XXIII) chain (540 aa).

Over residues Met1 to Arg26 the composition is skewed to gly residues. The disordered stretch occupies residues Met1 to Ala28. At Met1–Arg34 the chain is on the cytoplasmic side. The chain crosses the membrane as a helical; Signal-anchor for type II membrane protein span at residues Ala35–Val56. The Extracellular segment spans residues Gln57 to Lys540. 2 disordered regions span residues Ala109–Gly304 and Leu316–Lys540. Collagen-like domains are found at residues Gly124–Lys243, Gln251–Asp305, Gly321–Ser380, Gly412–Gly460, and Gly463–Asp522. 2 stretches are compositionally biased toward low complexity: residues Gln140–Pro156 and Pro168–Ala183. A compositionally biased stretch (pro residues) spans Pro185–Arg195. Positions Pro322–Ile334 are enriched in pro residues. Positions Asp350 to Pro362 are enriched in basic and acidic residues. A compositionally biased stretch (pro residues) spans Pro411–Pro422. 2 stretches are compositionally biased toward basic and acidic residues: residues Asp435–Ser444 and Arg486–Val503.

As to quaternary structure, homotrimer. In terms of processing, undergoes proteolytic cleavage by furin protease to yield a 60 kDa soluble form that forms a homotrimer and exhibits a low affinity interaction with heparin.

The protein localises to the cell membrane. This is Collagen alpha-1(XXIII) chain (COL23A1) from Homo sapiens (Human).